The primary structure comprises 697 residues: Elongation factor G 2 (697 aa).

Positions 5-280 constitute a tr-type G domain; sequence SKYRNIGIFA…AVVDYLPAPN (276 aa). GTP is bound by residues 14–21, 78–82, and 132–135; these read AHVDAGKT, DTPGH, and NKLD.

The protein belongs to the TRAFAC class translation factor GTPase superfamily. Classic translation factor GTPase family. EF-G/EF-2 subfamily.

It localises to the cytoplasm. Functionally, catalyzes the GTP-dependent ribosomal translocation step during translation elongation. During this step, the ribosome changes from the pre-translocational (PRE) to the post-translocational (POST) state as the newly formed A-site-bound peptidyl-tRNA and P-site-bound deacylated tRNA move to the P and E sites, respectively. Catalyzes the coordinated movement of the two tRNA molecules, the mRNA and conformational changes in the ribosome. This is Elongation factor G 2 from Shewanella sp. (strain MR-4).